A 126-amino-acid chain; its full sequence is Apolipoprotein C-IV (126 aa).

The signal sequence occupies residues 1–27; the sequence is MSLLRHRLQALPSLCLCVLVLACIGAC.

Belongs to the apolipoprotein C4 family.

Its subcellular location is the secreted. Functionally, may participate in lipoprotein metabolism. This chain is Apolipoprotein C-IV (APOC4), found in Aotus nancymaae (Ma's night monkey).